We begin with the raw amino-acid sequence, 348 residues long: Phospho-2-dehydro-3-deoxyheptonate aldolase, Trp-sensitive (348 aa).

The protein belongs to the class-I DAHP synthase family.

The catalysed reaction is D-erythrose 4-phosphate + phosphoenolpyruvate + H2O = 7-phospho-2-dehydro-3-deoxy-D-arabino-heptonate + phosphate. It functions in the pathway metabolic intermediate biosynthesis; chorismate biosynthesis; chorismate from D-erythrose 4-phosphate and phosphoenolpyruvate: step 1/7. Its function is as follows. Stereospecific condensation of phosphoenolpyruvate (PEP) and D-erythrose-4-phosphate (E4P) giving rise to 3-deoxy-D-arabino-heptulosonate-7-phosphate (DAHP). This chain is Phospho-2-dehydro-3-deoxyheptonate aldolase, Trp-sensitive (aroH), found in Salmonella typhi.